The following is a 202-amino-acid chain: LexA repressor 1 (202 aa).

The segment at residues 28–48 (RAEIAQELGFKSPNAAEEHLK) is a DNA-binding region (H-T-H motif). Active-site for autocatalytic cleavage activity residues include Ser123 and Lys160.

The protein belongs to the peptidase S24 family. In terms of assembly, homodimer.

The enzyme catalyses Hydrolysis of Ala-|-Gly bond in repressor LexA.. Represses a number of genes involved in the response to DNA damage (SOS response), including recA and lexA. In the presence of single-stranded DNA, RecA interacts with LexA causing an autocatalytic cleavage which disrupts the DNA-binding part of LexA, leading to derepression of the SOS regulon and eventually DNA repair. This Pseudomonas syringae pv. tomato (strain ATCC BAA-871 / DC3000) protein is LexA repressor 1.